We begin with the raw amino-acid sequence, 469 residues long: MTTKTRFAPSPTGFLHVGGARTALYSWLQARANNGEFVLRIEDTDIERSTQAACDAILEGMNWLGLTWDEGPYYQTKRFDRYNEIIAQMLEKGTAYKCYCSRERIDALRESQAANGEAQKYDGCCRDLPARDTDEPFVVRFKNPIGGSVVFDDHVRGRIEFSNDALDDLIIARTDGVPTYNFCVVVDDWDMGITCVVRGEDHINNTPRQINILKALGAPIPEYAHVSMILGDDGAKLSKRHGAVSVMQYRDDGYLPEALLNYLVRLGWSHGDQEVFSLEEMKQYFKLDDINKAPSAFNTDKLVWLNQHYIKTLDPEYVATHLQWHMDDQKIDTSNGPALAEVVTALAERAKTLKELAASSRYFYEDFADFDAEQAKKHLRGVALEPLQLVQQKLAALTEWTVEAIHLAIEQTATELDVGMGKVGMPLRVAVTGAGQSPGLDITLFLIGRSRSEQRISKAIEFVADRINS.

The 'HIGH' region signature appears at 9–19 (PSPTGFLHVGG). The Zn(2+) site is built by Cys-98, Cys-100, Cys-125, and Asp-127. The 'KMSKS' region motif lies at 236–240 (KLSKR). ATP is bound at residue Lys-239.

It belongs to the class-I aminoacyl-tRNA synthetase family. Glutamate--tRNA ligase type 1 subfamily. In terms of assembly, monomer. Zn(2+) serves as cofactor.

It is found in the cytoplasm. The catalysed reaction is tRNA(Glu) + L-glutamate + ATP = L-glutamyl-tRNA(Glu) + AMP + diphosphate. Its function is as follows. Catalyzes the attachment of glutamate to tRNA(Glu) in a two-step reaction: glutamate is first activated by ATP to form Glu-AMP and then transferred to the acceptor end of tRNA(Glu). This Shewanella putrefaciens (strain CN-32 / ATCC BAA-453) protein is Glutamate--tRNA ligase.